The following is a 150-amino-acid chain: UPF0178 protein PputW619_5044 (150 aa).

The protein belongs to the UPF0178 family.

The polypeptide is UPF0178 protein PputW619_5044 (Pseudomonas putida (strain W619)).